A 113-amino-acid polypeptide reads, in one-letter code: Beta-defensin 112 (113 aa).

Cystine bridges form between Cys54–Cys82, Cys61–Cys75, and Cys65–Cys83.

Belongs to the beta-defensin family.

Its subcellular location is the secreted. In terms of biological role, has antibacterial activity. This chain is Beta-defensin 112 (DEFB112), found in Homo sapiens (Human).